A 153-amino-acid chain; its full sequence is Mitochondrial fission 1 protein (153 aa).

Residues 1-124 (MTQLPYAVDA…LIDDKVTKEG (124 aa)) are Cytoplasmic-facing. The TPR repeat unit spans residues 73 to 106 (RECLYYLALGNYKLGNYAQARKYNDALLENEPAN). Residues 125 to 145 (LMGVAIISGVAVAAGVIGGVL) traverse the membrane as a helical segment. Over 146 to 153 (LRNLGRKR) the chain is Mitochondrial intermembrane.

It belongs to the FIS1 family.

It localises to the mitochondrion outer membrane. Has a role in mitochondrial fission. Has a role in outer membrane fission but not matrix separation. The polypeptide is Mitochondrial fission 1 protein (mtp-2) (Neurospora crassa (strain ATCC 24698 / 74-OR23-1A / CBS 708.71 / DSM 1257 / FGSC 987)).